A 371-amino-acid chain; its full sequence is GDP-mannose 3,5-epimerase 2 (371 aa).

NAD(+) is bound by residues 29 to 55, D53, and D73; that span reads GAGG…SDWK. Substrate-binding positions include G98 and 138–140; that span reads SAC. The NAD(+) site is built by Y168 and K172. Residue Y168 is the Proton acceptor of the active site. Substrate contacts are provided by residues N197, 210–212, K219, 235–237, R300, and S350; these read EKA and QTR.

This sequence belongs to the NAD(P)-dependent epimerase/dehydratase family. The cofactor is NAD(+).

It catalyses the reaction GDP-alpha-D-mannose = GDP-beta-L-gulose. The enzyme catalyses GDP-beta-L-gulose = GDP-beta-L-galactose. It participates in cofactor biosynthesis; L-ascorbate biosynthesis via GDP-alpha-D-mannose pathway; L-ascorbate from GDP-alpha-D-mannose: step 1/5. Catalyzes a reversible epimerization of GDP-D-mannose that precedes the committed step in the biosynthesis of vitamin C (L-ascorbate), resulting in the hydrolysis of the highly energetic glycosyl-pyrophosphoryl linkage. Able to catalyze 2 distinct epimerization reactions and can release both GDP-L-galactose and GDP-L-gulose from GDP-mannose. This Oryza sativa subsp. japonica (Rice) protein is GDP-mannose 3,5-epimerase 2 (GME-2).